A 365-amino-acid polypeptide reads, in one-letter code: Anhydro-N-acetylmuramic acid kinase (365 aa).

12-19 lines the ATP pocket; it reads GTSLDGID.

It belongs to the anhydro-N-acetylmuramic acid kinase family.

It catalyses the reaction 1,6-anhydro-N-acetyl-beta-muramate + ATP + H2O = N-acetyl-D-muramate 6-phosphate + ADP + H(+). The protein operates within amino-sugar metabolism; 1,6-anhydro-N-acetylmuramate degradation. Its pathway is cell wall biogenesis; peptidoglycan recycling. Its function is as follows. Catalyzes the specific phosphorylation of 1,6-anhydro-N-acetylmuramic acid (anhMurNAc) with the simultaneous cleavage of the 1,6-anhydro ring, generating MurNAc-6-P. Is required for the utilization of anhMurNAc either imported from the medium or derived from its own cell wall murein, and thus plays a role in cell wall recycling. This Rhizorhabdus wittichii (strain DSM 6014 / CCUG 31198 / JCM 15750 / NBRC 105917 / EY 4224 / RW1) (Sphingomonas wittichii) protein is Anhydro-N-acetylmuramic acid kinase.